The following is a 368-amino-acid chain: L-cysteine desulfhydrase Cds1 (368 aa).

Lysine 67 is subject to N6-(pyridoxal phosphate)lysine. Residues glycine 203 to threonine 207 and serine 299 contribute to the pyridoxal 5'-phosphate site.

This sequence belongs to the cysteine synthase/cystathionine beta-synthase family. Cds1 subfamily. Pyridoxal 5'-phosphate is required as a cofactor.

It localises to the cytoplasm. It carries out the reaction L-cysteine + H2O = hydrogen sulfide + pyruvate + NH4(+) + H(+). In terms of biological role, a cysteine desulfhydrase that generates hydrogen sulfide, H(2)S. The H(2)S produced by this enzyme stimulates respiration in M.tuberculosis, mediated primarily via cytochrome bd with a lesser contribution from cytochrome bc1/aa3. H(2)S modulates the balance between respiration and glycolysis, and also contributes to redox homeostasis. Probably eliminates toxic levels of Cys (which can induce oxidative stress). The sequence is that of L-cysteine desulfhydrase Cds1 from Mycobacterium tuberculosis (strain ATCC 25177 / H37Ra).